Consider the following 128-residue polypeptide: Large ribosomal subunit protein bL12 (128 aa).

The protein belongs to the bacterial ribosomal protein bL12 family. As to quaternary structure, homodimer. Part of the ribosomal stalk of the 50S ribosomal subunit. Forms a multimeric L10(L12)X complex, where L10 forms an elongated spine to which 2 to 4 L12 dimers bind in a sequential fashion. Binds GTP-bound translation factors.

Its function is as follows. Forms part of the ribosomal stalk which helps the ribosome interact with GTP-bound translation factors. Is thus essential for accurate translation. The sequence is that of Large ribosomal subunit protein bL12 from Trichormus variabilis (strain ATCC 29413 / PCC 7937) (Anabaena variabilis).